Consider the following 791-residue polypeptide: DNA repair and recombination protein RAD54-like (791 aa).

Residues 1–20 (MRRSLAPSQRIGQSTASRNA) are compositionally biased toward polar residues. The segment at 1-53 (MRRSLAPSQRIGQSTASRNAFTPPLLQKKNKRACQKDLRLDTDADEDKERKRF) is disordered. Positions 2–9 (RRSLAPSQ) are required for chromatin remodeling, strand pairing activities and coupling of ATPase activity. Position 22 is a phosphothreonine (threonine 22). Positions 34-53 (CQKDLRLDTDADEDKERKRF) are enriched in basic and acidic residues. Residues 175–349 (EGKKGDFNGC…FSLVNFVNPE (175 aa)) form the Helicase ATP-binding domain. 188-195 (DEMGLGKT) serves as a coordination point for ATP. Positions 300 to 303 (DEGH) match the DEGH box motif. Residues 506–663 (LLDFMLAAIR…NNESSEKHFT (158 aa)) form the Helicase C-terminal domain. Positions 747–791 (KEVVESPESAAAEAESVEEESQPTQRKRPSPPLSDDSADEDFIGF) are disordered. Residues 782–791 (DSADEDFIGF) are compositionally biased toward acidic residues.

It belongs to the SNF2/RAD54 helicase family. As to quaternary structure, interacts (via N-terminus) with spn-A/Rad51.

It is found in the nucleus. Its function is as follows. Involved in mitotic DNA repair and meiotic recombination. Functions in the recombinational DNA repair pathway. Essential for interhomolog gene conversion (GC), but may have a less important role in intersister GC than spn-A/Rad51. In the presence of DNA, spn-A/Rad51 enhances the ATPase activity of okr/Rad54. This chain is DNA repair and recombination protein RAD54-like, found in Drosophila ananassae (Fruit fly).